A 122-amino-acid polypeptide reads, in one-letter code: Large ribosomal subunit protein uL18 (122 aa).

This sequence belongs to the universal ribosomal protein uL18 family. As to quaternary structure, part of the 50S ribosomal subunit; part of the 5S rRNA/L5/L18/L25 subcomplex. Contacts the 5S and 23S rRNAs.

In terms of biological role, this is one of the proteins that bind and probably mediate the attachment of the 5S RNA into the large ribosomal subunit, where it forms part of the central protuberance. This Syntrophotalea carbinolica (strain DSM 2380 / NBRC 103641 / GraBd1) (Pelobacter carbinolicus) protein is Large ribosomal subunit protein uL18.